The chain runs to 437 residues: GTPase Der (437 aa).

EngA-type G domains lie at 3-167 (NLVA…SKEG) and 176-352 (PRFA…QART). Residues 9 to 16 (GRPNVGKS), 56 to 60 (DTGGW), 119 to 122 (NKTD), 182 to 189 (GRPNAGKS), 229 to 233 (DTAGI), and 294 to 297 (NKWD) each bind GTP. The KH-like domain maps to 353 to 437 (TRIPTARLNE…TPINIFIRQK (85 aa)).

This sequence belongs to the TRAFAC class TrmE-Era-EngA-EngB-Septin-like GTPase superfamily. EngA (Der) GTPase family. Associates with the 50S ribosomal subunit.

Functionally, GTPase that plays an essential role in the late steps of ribosome biogenesis. The sequence is that of GTPase Der from Phocaeicola vulgatus (strain ATCC 8482 / DSM 1447 / JCM 5826 / CCUG 4940 / NBRC 14291 / NCTC 11154) (Bacteroides vulgatus).